Reading from the N-terminus, the 273-residue chain is Large ribosomal subunit protein uL2 (273 aa).

Disordered regions lie at residues 28–54 and 221–273; these read KPYA…TRHI and RGTA…RRTK. The span at 39 to 48 shows a compositional bias: low complexity; it reads KSGGRNNNGR.

The protein belongs to the universal ribosomal protein uL2 family. Part of the 50S ribosomal subunit. Forms a bridge to the 30S subunit in the 70S ribosome.

Functionally, one of the primary rRNA binding proteins. Required for association of the 30S and 50S subunits to form the 70S ribosome, for tRNA binding and peptide bond formation. It has been suggested to have peptidyltransferase activity; this is somewhat controversial. Makes several contacts with the 16S rRNA in the 70S ribosome. This Pectobacterium carotovorum subsp. carotovorum (strain PC1) protein is Large ribosomal subunit protein uL2.